Reading from the N-terminus, the 515-residue chain is Maturase K (515 aa).

Belongs to the intron maturase 2 family. MatK subfamily.

Its subcellular location is the plastid. The protein localises to the chloroplast. Usually encoded in the trnK tRNA gene intron. Probably assists in splicing its own and other chloroplast group II introns. This Alpinia calcarata (Snap ginger) protein is Maturase K.